The sequence spans 396 residues: MVLRFITSGESHGKGLIGIVEQMPAGVEIGEEDINRELQRRQKGYGRGGRMKIESDRVEIFSGIRNGYSLGTPISYLIRNQDFENWQEIMATGECKRHEEKIVNRPRPGHADLAGAMKYNQSDMRNILERASARETAARVAAGAMFKKLLESFNIRVYSQVKSIGPVQVKTWQVNEQNWQDLREKVDESPLHSVDTEKEPLMREAIDQARSKGESLGGSFEVGVIGVPPGLGSYISWESRLDSQICALLMSIPAIKAAEIGEGIANSAEPGSRVHDEIFYSEEGGLHRKSNRAGGIEGGISNGETVWARAYMKPIPTLYKPLTSVNTKLWQEEKADIERSDICAVPAAAIVGESMLAFAIARAFLEKFSGDSLDEIRKSYTTYQAYLKRVWKWEKI.

NADP(+) is bound by residues Arg41 and Arg47. Residues 130-132 (RAS), Gly298, 313-317 (KPIPT), and Arg339 contribute to the FMN site.

The protein belongs to the chorismate synthase family. In terms of assembly, homotetramer. The cofactor is FMNH2.

It carries out the reaction 5-O-(1-carboxyvinyl)-3-phosphoshikimate = chorismate + phosphate. It participates in metabolic intermediate biosynthesis; chorismate biosynthesis; chorismate from D-erythrose 4-phosphate and phosphoenolpyruvate: step 7/7. Its function is as follows. Catalyzes the anti-1,4-elimination of the C-3 phosphate and the C-6 proR hydrogen from 5-enolpyruvylshikimate-3-phosphate (EPSP) to yield chorismate, which is the branch point compound that serves as the starting substrate for the three terminal pathways of aromatic amino acid biosynthesis. This reaction introduces a second double bond into the aromatic ring system. This chain is Chorismate synthase, found in Syntrophomonas wolfei subsp. wolfei (strain DSM 2245B / Goettingen).